The sequence spans 1010 residues: MSMEPRKKRNSILKVRQAVETIEETVMNSGPSSTTTNRRVSFHNVKHVKQYDRDHGKILDATPVKEKITDTIGSDGILTPRGGNMDISESPACTSSFQVFGGGNLDKTMDMSLETTINENNETARLFETTRDPTLLYEKIVETTTKVTERIVSMPLDDTLAMFNTTNQEDKDMSVDRSVLFTIPKVPKHNATMNRTIPMDLDESKAAGGQCDETMNVFNFTNLEAAEMDTSKLDENNTMNAIRIPINSNVMPVDMDITEHHTLIEEKKNDTFGPSQLMDISAPQVQVNDTLAIFNSPRDICNKGLGVPQNLINIASNVVPVDMDITDQAVLNAEKKNDQFETSQLMDISIPKVLVNDTMAMFNSPKHVSKSSMDLEKTIEAADKSTKYPSIADEVEDLDMDMDITEQQPCEAGNQQNDGLQLQKEDLMDISVIRDSPAVNDTMAVFQSPARVKIGANNSIIDSQKSIVFGDEMSIDETQNDGTLTLPKSNVEVTTTNDVYTSLERQEENASENVSMINESSVHSEIDKKSFMLIEEERAFMHSSMIDVAQKLEDDGSSKTPVILASQSASLATKEPSALHNSSATLNNSMELDNNTLLKTMQITTCEDISMVHESIAVELNSNKEQEQFGDETLQKNDTSNTGANFTFQGHNETSQIMNNVDSEAVNTSKISTYSAFNLSINQSISKRRRSLLNSARESPRRVALENSIMSMNGQTMEALTEYRQNKTMQTSQDSMPSMSLNDSGRDILAMNTSVRSPHLNSSKTAAPGTPSLMSQNVQLPPPSPQFEMPDFDPAVVNVVYLTSEDPSTEQHPEALKFQRIVENEKMKVQHEIDSLNSTNQLSAEKIDMLKTKELLKFSHDEREAIMIARKDAEIKFLELRLKFALEKKIESDQEIAELEQGNSKMAEQLRGLDKMAVVQKELEKLRSLPPSREESGKIRKEWMEMKQWEFDQKMKALRNVRSNMIALRSEKNALEMKVAEEHEKFAQRNDLKKSRMLVFSKAVKKIVNF.

9 tandem repeats follow at residues 85 to 88 (MDIS), 109 to 112 (MDMS), 228 to 231 (MDTS), 255 to 258 (MDIT), 278 to 281 (MDIS), 323 to 326 (MDIT), 346 to 349 (MDIS), 402 to 405 (MDIT), and 428 to 431 (MDIS). A 9 X 4 AA repeats of M-[D/E]-[I/L/M]-[S/T] region spans residues 85–431 (MDISESPACT…LQKEDLMDIS (347 aa)). Coiled-coil stretches lie at residues 820 to 915 (RIVE…GLDK) and 956 to 988 (KALRNVRSNMIALRSEKNALEMKVAEEHEKFAQ).

Component of the KNL1 complex composed of knl-1 and kbp-5. Part of the ten-subunit outer kinetochore KMN network that includes the KNL1, MIS12 and NDC80 complexes. Interacts with the protein phosphatase 1 (PP1) catalytic subunit gsp-1; the interaction is direct. Interacts with the protein phosphatase 1 (PP1) catalytic subunit gsp-2; the interaction is direct. Interacts with the MIS12 complex subunits kbp-1, kbp-2 and mis-12. Interacts with the NDC80 complex components ndc-80 and him-10. Interacts with knl-3. Interacts with kbp-3. Interacts with kbp-4. Interacts with kbp-5.

Its subcellular location is the cytoplasm. It localises to the cell cortex. The protein localises to the chromosome. It is found in the centromere. The protein resides in the kinetochore. In terms of biological role, acts as a component of the outer kinetochore KNL1 complex that serves as a docking point for spindle assembly checkpoint components and mediates microtubule-kinetochore interactions. Kinetochores, consisting of a centromere-associated inner segment and a microtubule-contacting outer segment, play a crucial role in chromosome segregation by mediating the physical connection between centromeric DNA and spindle microtubules. The outer kinetochore is made up of the ten-subunit KMN network, comprising the MIS12, NDC80 and KNL1 complexes, and auxiliary microtubule-associated components; together they connect the outer kinetochore with the inner kinetochore, bind microtubules, and mediate interactions with mitotic checkpoint proteins that delay anaphase until chromosomes are bioriented on the spindle. Binds the protein phosphatase 1 catalytic subunits gsp-1 and gsp-2, which has a role in delaying formation of load-bearing kinetochore-microtubule attachments. Required for the recruitment of spindle-assembly checkpoint components bub-1 and mdf-1/2 to unattached kinetochores. Binds microtubules which plays a role in silencing of the spindle assembly checkpoint, but not the formation of load-bearing microtubule-kinetochore attachments. Has a role in the correct localization of the spindly-like protein spdl-1 and the RZZ complex that is composed of rod-1, czw-1 and zwl-1 to kinetochores. This chain is Outer kinetochore KNL1 complex subunit knl-1 (knl-1), found in Caenorhabditis elegans.